Consider the following 1295-residue polypeptide: Phosphoribosylformylglycinamidine synthase (1295 aa).

The tract at residues tryptophan 305–lysine 327 is disordered. Residues glycine 307–aspartate 318 and alanine 678 contribute to the ATP site. The Mg(2+) site is built by glutamate 718, asparagine 722, and aspartate 884. Serine 886 contributes to the ATP binding site. The region spanning valine 1042 to glycine 1295 is the Glutamine amidotransferase type-1 domain. Cysteine 1135 serves as the catalytic Nucleophile. Active-site residues include histidine 1260 and glutamate 1262.

In the N-terminal section; belongs to the FGAMS family. As to quaternary structure, monomer.

Its subcellular location is the cytoplasm. The enzyme catalyses N(2)-formyl-N(1)-(5-phospho-beta-D-ribosyl)glycinamide + L-glutamine + ATP + H2O = 2-formamido-N(1)-(5-O-phospho-beta-D-ribosyl)acetamidine + L-glutamate + ADP + phosphate + H(+). It functions in the pathway purine metabolism; IMP biosynthesis via de novo pathway; 5-amino-1-(5-phospho-D-ribosyl)imidazole from N(2)-formyl-N(1)-(5-phospho-D-ribosyl)glycinamide: step 1/2. Phosphoribosylformylglycinamidine synthase involved in the purines biosynthetic pathway. Catalyzes the ATP-dependent conversion of formylglycinamide ribonucleotide (FGAR) and glutamine to yield formylglycinamidine ribonucleotide (FGAM) and glutamate. The chain is Phosphoribosylformylglycinamidine synthase from Escherichia coli O6:K15:H31 (strain 536 / UPEC).